The sequence spans 1105 residues: Pheromone-regulated membrane protein 10 (1105 aa).

Over residues 1 to 11 (MSDNRPTYDTS) the composition is skewed to polar residues. 6 disordered regions span residues 1-22 (MSDN…NHFH), 36-55 (RKQN…TASN), 65-123 (GSNH…FYGD), 151-278 (IKPK…GGGL), 385-473 (AGAS…FLRG), and 520-656 (EQKS…LRHK). Over residues 67-82 (NHKFGNSINNNNNNAN) the composition is skewed to low complexity. The span at 85 to 106 (LGSSSAGTNRRSLISPTSSTHV) shows a compositional bias: polar residues. The span at 162 to 178 (DSSDDDGNNLDEVEDET) shows a compositional bias: acidic residues. The segment covering 185–197 (LNQNHPPQQYYET) has biased composition (polar residues). The span at 198-210 (DSSDEDEEDDDEV) shows a compositional bias: acidic residues. Over residues 390-413 (LDHSQQSSAAPSTEITPSQSPNQH) the composition is skewed to polar residues. The span at 417–439 (EKSNNNENNQQSTTVESSSSTSS) shows a compositional bias: low complexity. The segment covering 446–459 (LARRRASEERKKAE) has biased composition (basic and acidic residues). 3 stretches are compositionally biased toward polar residues: residues 520-539 (EQKS…GTAL), 592-606 (RTNT…NSEE), and 624-633 (MNANLPSFQN). Helical transmembrane passes span 782-802 (PPWL…PFAF), 809-829 (LPIS…VSSI), 835-855 (SVFE…IGSI), 860-880 (LFCF…GYII), 903-923 (VIYS…YGWI), 938-958 (AIDE…LGLI), 963-983 (WSQV…SFFA), 986-1006 (HFST…GVLG), 1015-1035 (GMAV…GIAS), and 1075-1095 (VEVS…IYPF).

It belongs to the ThrE exporter (TC 2.A.79) family.

It is found in the membrane. The polypeptide is Pheromone-regulated membrane protein 10 (PRM10) (Candida albicans (strain SC5314 / ATCC MYA-2876) (Yeast)).